Reading from the N-terminus, the 503-residue chain is Maturase K (503 aa).

This sequence belongs to the intron maturase 2 family. MatK subfamily.

It localises to the plastid. The protein resides in the chloroplast. Its function is as follows. Usually encoded in the trnK tRNA gene intron. Probably assists in splicing its own and other chloroplast group II introns. The protein is Maturase K of Kunzea pulchella (Red kunzea).